The sequence spans 341 residues: Glycerol-3-phosphate dehydrogenase [NAD(P)+] (341 aa).

4 residues coordinate NADPH: S15, W16, R36, and K110. 3 residues coordinate sn-glycerol 3-phosphate: K110, G139, and S141. A143 contributes to the NADPH binding site. Positions 194, 247, 257, 258, and 259 each coordinate sn-glycerol 3-phosphate. Residue K194 is the Proton acceptor of the active site. R258 contacts NADPH. NADPH contacts are provided by V282 and E284.

The protein belongs to the NAD-dependent glycerol-3-phosphate dehydrogenase family.

The protein resides in the cytoplasm. It carries out the reaction sn-glycerol 3-phosphate + NAD(+) = dihydroxyacetone phosphate + NADH + H(+). The catalysed reaction is sn-glycerol 3-phosphate + NADP(+) = dihydroxyacetone phosphate + NADPH + H(+). Its pathway is membrane lipid metabolism; glycerophospholipid metabolism. In terms of biological role, catalyzes the reduction of the glycolytic intermediate dihydroxyacetone phosphate (DHAP) to sn-glycerol 3-phosphate (G3P), the key precursor for phospholipid synthesis. The polypeptide is Glycerol-3-phosphate dehydrogenase [NAD(P)+] (Xanthomonas campestris pv. campestris (strain 8004)).